The chain runs to 402 residues: Acetate kinase (402 aa).

Residue Asn7 participates in Mg(2+) binding. An ATP-binding site is contributed by Lys14. Residue Arg95 coordinates substrate. Residue Asp152 is the Proton donor/acceptor of the active site. Residues His212–Gly216, Asp286–Arg288, and Gly334–Asn338 each bind ATP. Glu388 contributes to the Mg(2+) binding site.

This sequence belongs to the acetokinase family. In terms of assembly, homodimer. Requires Mg(2+) as cofactor. The cofactor is Mn(2+).

The protein resides in the cytoplasm. It carries out the reaction acetate + ATP = acetyl phosphate + ADP. Its pathway is metabolic intermediate biosynthesis; acetyl-CoA biosynthesis; acetyl-CoA from acetate: step 1/2. Its function is as follows. Catalyzes the formation of acetyl phosphate from acetate and ATP. Can also catalyze the reverse reaction. This is Acetate kinase from Nitratidesulfovibrio vulgaris (strain ATCC 29579 / DSM 644 / CCUG 34227 / NCIMB 8303 / VKM B-1760 / Hildenborough) (Desulfovibrio vulgaris).